The primary structure comprises 212 residues: uncharacterized protein (212 aa).

G53, E74, and D97 together coordinate S-adenosyl-L-methionine.

The protein belongs to the methyltransferase superfamily. YrrT family.

Functionally, could be a S-adenosyl-L-methionine-dependent methyltransferase. This is an uncharacterized protein from Bacillus cytotoxicus (strain DSM 22905 / CIP 110041 / 391-98 / NVH 391-98).